Here is a 354-residue protein sequence, read N- to C-terminus: MMRSTLSLLQKCRLPNNNGSLLSFKNNQVVNQTALFSMKSNQQYRFYSTDVKDLAPLIKELRNRTSAPLKDCKEALIQNKNDIEKATSWLHEKGKSTANKFADRAVVEGTISIVVNNGKAVILEMNSETDFVSRGETFRALADQISRATLESNLLAQSLAEIKPDTIAPQPASGSTVADLIVGTVAKLRENIRLRRVHAIDASNQPNTIVAGYAHDPSGTNQFGRLGSLVQLQYEGGQPDIAALNQLARNIAVHIVGVGPSYVSIESVPKVLLDEAIANKRHPNSLYDEVVLLEQKYISGEDNETVKAAVQRISKQLKTNITIKSFVRYSVGEGMEKKVENYGAEVMEKINKAK.

A mitochondrion-targeting transit peptide spans 1–47; that stretch reads MMRSTLSLLQKCRLPNNNGSLLSFKNNQVVNQTALFSMKSNQQYRFY.

Belongs to the EF-Ts family.

Its subcellular location is the mitochondrion. Associates with the EF-Tu.GDP complex and induces the exchange of GDP to GTP. It remains bound to the aminoacyl-tRNA.EF-Tu.GTP complex up to the GTP hydrolysis stage on the ribosome. In Heterostelium pallidum (strain ATCC 26659 / Pp 5 / PN500) (Cellular slime mold), this protein is Elongation factor Ts, mitochondrial (tsfm).